Reading from the N-terminus, the 163-residue chain is Bursicon (163 aa).

The first 23 residues, 1–23, serve as a signal peptide directing secretion; sequence MKSTFLVVLELAFFLLPGRVLYA. 5 disulfide bridges follow: Cys39–Cys88, Cys53–Cys102, Cys63–Cys123, Cys67–Cys125, and Cys85–Cys128. Positions 39–129 constitute a CTCK domain; it reads CQVTPVIHVL…PLECMCRPCT (91 aa).

In terms of assembly, heterodimer of burs and pburs.

The protein resides in the secreted. Functionally, final heterodimeric neurohormone released at the end of the molting cycle, involved in the sclerotization (tanning) of the insect cuticle, melanization and wing spreading. The polypeptide is Bursicon (burs124) (Anopheles gambiae (African malaria mosquito)).